Consider the following 148-residue polypeptide: 3-dehydroquinate dehydratase (148 aa).

The active-site Proton acceptor is the Tyr-26. Residues Asn-77, His-83, and Asp-90 each coordinate substrate. Residue His-103 is the Proton donor of the active site. Substrate contacts are provided by residues 104–105 (LS) and Arg-114.

Belongs to the type-II 3-dehydroquinase family. Homododecamer.

The enzyme catalyses 3-dehydroquinate = 3-dehydroshikimate + H2O. The protein operates within metabolic intermediate biosynthesis; chorismate biosynthesis; chorismate from D-erythrose 4-phosphate and phosphoenolpyruvate: step 3/7. Functionally, catalyzes a trans-dehydration via an enolate intermediate. The sequence is that of 3-dehydroquinate dehydratase (aroQ) from Pasteurella multocida (strain Pm70).